The sequence spans 349 residues: Short-wave-sensitive opsin 1 (349 aa).

Residues 1–34 are Extracellular-facing; sequence MSKMPEEEEFYLFKNISSVGPWDGPQYHIAPVWA. N-linked (GlcNAc...) asparagine glycosylation occurs at Asn-15. The helical transmembrane segment at 35–59 threads the bilayer; it reads FQLQAAFMGIVFLAGLPLNSMVLVA. Topologically, residues 60-71 are cytoplasmic; that stretch reads TVRYKKLRHPLN. Residues 72–97 form a helical membrane-spanning segment; sequence YVLVNVSVGGFLLCIFSVLPVFVNSC. At 98–111 the chain is on the extracellular side; sequence NGYFVFGRHVCALE. The cysteines at positions 108 and 185 are disulfide-linked. The helical transmembrane segment at 112-131 threads the bilayer; sequence GFLGTVAGLVTGWSLAFLAF. At 132 to 150 the chain is on the cytoplasmic side; that stretch reads ERYIVICKPFGNFRFSSKH. Residues 151-174 form a helical membrane-spanning segment; sequence ALMVVLTTWTIGIGVSIPPFFGWS. Residues 175-200 are Extracellular-facing; the sequence is RYIAEGLQCSCGPDWYTVGTKYRSEY. A helical membrane pass occupies residues 201 to 228; sequence YTWFLFIFCFIVPLSLICFSYAQLLRAL. At 229-250 the chain is on the cytoplasmic side; that stretch reads KAVAAQQQESATTQKAEREVSR. The chain crosses the membrane as a helical span at residues 251–274; the sequence is MVVVMVGSFCVCYVPYAALAMYMV. The Extracellular portion of the chain corresponds to 275–282; the sequence is NNRNHGLD. Residues 283–307 traverse the membrane as a helical segment; that stretch reads LRLVSIPAFFSKSSCIYNPIIYCFM. The residue at position 294 (Lys-294) is an N6-(retinylidene)lysine. At 308–349 the chain is on the cytoplasmic side; that stretch reads NKQFRACIMEMVCGKAMTDESDISSSQKTEVSTVSSSQVGPN.

The protein belongs to the G-protein coupled receptor 1 family. Opsin subfamily. Phosphorylated on some or all of the serine and threonine residues present in the C-terminal region.

The protein localises to the cell membrane. Its subcellular location is the photoreceptor inner segment. It localises to the cell projection. The protein resides in the cilium. It is found in the photoreceptor outer segment. The protein localises to the cytoplasm. Its subcellular location is the perinuclear region. Functionally, visual pigments are the light-absorbing molecules that mediate vision. They consist of an apoprotein, opsin, covalently linked to cis-retinal. Required for the maintenance of cone outer segment organization in the ventral retina, but not essential for the maintenance of functioning cone photoreceptors. Involved in ensuring correct abundance and localization of retinal membrane proteins. May increase spectral sensitivity in dim light. This Saimiri boliviensis boliviensis (Bolivian squirrel monkey) protein is Short-wave-sensitive opsin 1 (OPN1SW).